Consider the following 89-residue polypeptide: DNA/RNA-binding protein Alba 2 (89 aa).

The residue at position 12 (Lys12) is an N6-acetyllysine. The Zn(2+) site is built by Lys14, Asp18, and Asp22.

It belongs to the histone-like Alba family. As to quaternary structure, forms homodimers and homotetramers. Homodimer at pH below 6.0. Forms homotetramers and higher order homooligomers at near the growth temperature of 80 degrees Celsius and pH 7.0. Interacts with Alba 1; heterodimers lack cooperative DNA-binding behavior and result in more compact chromatin structures compared to Alba 1 homodimers. Post-translationally, acetylated. Acetylation at Lys-12 decreases DNA-binding affinity.

The protein resides in the cytoplasm. It is found in the chromosome. Functionally, binds single-stranded DNA, RNA and double-stranded DNA. Involved in DNA compaction. This is DNA/RNA-binding protein Alba 2 from Saccharolobus solfataricus (strain ATCC 35092 / DSM 1617 / JCM 11322 / P2) (Sulfolobus solfataricus).